The following is a 370-amino-acid chain: Ubiquinone biosynthesis O-methyltransferase, mitochondrial (370 aa).

Residues 1 to 86 (MWGGSKLSSS…SYRLPWTRPY (86 aa)) constitute a mitochondrion transit peptide. Arginine 125 serves as a coordination point for S-adenosyl-L-methionine. 2 positions are modified to N6-acetyllysine: lysine 144 and lysine 150. S-adenosyl-L-methionine-binding residues include glycine 155 and aspartate 176. The residue at position 197 (lysine 197) is an N6-acetyllysine. Serine 223 is a binding site for S-adenosyl-L-methionine. Mg(2+) contacts are provided by glutamate 224, glutamate 227, and histidine 228.

It belongs to the class I-like SAM-binding methyltransferase superfamily. UbiG/COQ3 family. As to quaternary structure, component of a multi-subunit COQ enzyme complex, composed of at least COQ3, COQ4, COQ5, COQ6, COQ7 and COQ9. Mg(2+) is required as a cofactor.

Its subcellular location is the mitochondrion inner membrane. It catalyses the reaction 3,4-dihydroxy-5-(all-trans-decaprenyl)benzoate + S-adenosyl-L-methionine = 4-hydroxy-3-methoxy-5-(all-trans-decaprenyl)benzoate + S-adenosyl-L-homocysteine + H(+). It carries out the reaction a 3-demethylubiquinone + S-adenosyl-L-methionine = a ubiquinone + S-adenosyl-L-homocysteine. The catalysed reaction is 3-demethylubiquinol-10 + S-adenosyl-L-methionine = ubiquinol-10 + S-adenosyl-L-homocysteine + H(+). It participates in cofactor biosynthesis; ubiquinone biosynthesis. Its function is as follows. O-methyltransferase required for two non-consecutive steps during ubiquinone biosynthesis. Catalyzes the 2 O-methylation of 3,4-dihydroxy-5-(all-trans-decaprenyl)benzoic acid into 4-hydroxy-3-methoxy-5-(all-trans-decaprenyl)benzoic acid. Also catalyzes the last step of ubiquinone biosynthesis by mediating methylation of 3-demethylubiquinone into ubiquinone. Also able to mediate the methylation of 3-demethylubiquinol-10 into ubiquinol-10. The chain is Ubiquinone biosynthesis O-methyltransferase, mitochondrial from Bos taurus (Bovine).